We begin with the raw amino-acid sequence, 1028 residues long: Carbamoyl phosphate synthase large chain (1028 aa).

Positions 1-409 are carboxyphosphate synthetic domain; sequence MPPRRDLKKI…ALMKALRGLE (409 aa). Arg-129, Arg-169, Gly-175, Gly-176, Glu-208, Val-210, Glu-215, Gly-241, Val-242, His-243, Gln-285, and Glu-299 together coordinate ATP. The region spanning 133-328 is the ATP-grasp 1 domain; sequence QEAMRRIDLE…IAKIAALLAV (196 aa). Mg(2+) is bound by residues Gln-285, Glu-299, and Asn-301. The Mn(2+) site is built by Gln-285, Glu-299, and Asn-301. The oligomerization domain stretch occupies residues 410–549; the sequence is RDVRALAGVR…YSTYELEDEV (140 aa). Positions 550-933 are carbamoyl phosphate synthetic domain; that stretch reads WPSQKPKVVI…AYYKAELGAG (384 aa). The 193-residue stretch at 674–866 folds into the ATP-grasp 2 domain; it reads HALCQRLGIP…LAKLAALIAV (193 aa). The ATP site is built by Arg-710, Arg-750, Leu-752, Glu-757, Gly-782, Val-783, His-784, Ser-785, Gln-825, and Glu-837. Mg(2+)-binding residues include Gln-825, Glu-837, and Asn-839. Positions 825, 837, and 839 each coordinate Mn(2+). In terms of domain architecture, MGS-like spans 934–1028; the sequence is QRLPLSGQVR…QDWHQKAPRG (95 aa). Residues 934–1028 are allosteric domain; the sequence is QRLPLSGQVR…QDWHQKAPRG (95 aa).

Belongs to the CarB family. As to quaternary structure, composed of two chains; the small (or glutamine) chain promotes the hydrolysis of glutamine to ammonia, which is used by the large (or ammonia) chain to synthesize carbamoyl phosphate. Tetramer of heterodimers (alpha,beta)4. It depends on Mg(2+) as a cofactor. Mn(2+) serves as cofactor.

It catalyses the reaction hydrogencarbonate + L-glutamine + 2 ATP + H2O = carbamoyl phosphate + L-glutamate + 2 ADP + phosphate + 2 H(+). The enzyme catalyses hydrogencarbonate + NH4(+) + 2 ATP = carbamoyl phosphate + 2 ADP + phosphate + 2 H(+). The protein operates within amino-acid biosynthesis; L-arginine biosynthesis; carbamoyl phosphate from bicarbonate: step 1/1. It functions in the pathway pyrimidine metabolism; UMP biosynthesis via de novo pathway; (S)-dihydroorotate from bicarbonate: step 1/3. Large subunit of the glutamine-dependent carbamoyl phosphate synthetase (CPSase). CPSase catalyzes the formation of carbamoyl phosphate from the ammonia moiety of glutamine, carbonate, and phosphate donated by ATP, constituting the first step of 2 biosynthetic pathways, one leading to arginine and/or urea and the other to pyrimidine nucleotides. The large subunit (synthetase) binds the substrates ammonia (free or transferred from glutamine from the small subunit), hydrogencarbonate and ATP and carries out an ATP-coupled ligase reaction, activating hydrogencarbonate by forming carboxy phosphate which reacts with ammonia to form carbamoyl phosphate. The protein is Carbamoyl phosphate synthase large chain of Thermus thermophilus (strain ATCC BAA-163 / DSM 7039 / HB27).